A 282-amino-acid chain; its full sequence is Succinate dehydrogenase [ubiquinone] iron-sulfur subunit, mitochondrial (282 aa).

The transit peptide at Met1 to Gly30 directs the protein to the mitochondrion. Residues Lys42–Met135 enclose the 2Fe-2S ferredoxin-type domain. Residues Lys53 and Lys57 each carry the N6-acetyllysine modification. Cys95, Cys100, Cys103, and Cys115 together coordinate [2Fe-2S] cluster. Residues Phe148–Trp220 form an interaction with SDHAF1 region. The 4Fe-4S ferredoxin-type domain maps to Asp178–Tyr208. Residues Cys188, Cys191, and Cys194 each contribute to the [4Fe-4S] cluster site. Cys198 contributes to the [3Fe-4S] cluster binding site. Trp203 is a binding site for a ubiquinone. [3Fe-4S] cluster-binding residues include Cys245 and Cys251. Cys255 is a binding site for [4Fe-4S] cluster.

It belongs to the succinate dehydrogenase/fumarate reductase iron-sulfur protein family. In terms of assembly, component of complex II composed of four subunits: the flavoprotein (FP) SDHA, iron-sulfur protein (IP) SDHB, and a cytochrome b560 composed of SDHC and SDHD. Interacts with SDHAF1; the interaction is required for iron-sulfur cluster incorporation into SDHB. [2Fe-2S] cluster serves as cofactor. The cofactor is [3Fe-4S] cluster. Requires [4Fe-4S] cluster as cofactor.

It localises to the mitochondrion inner membrane. The enzyme catalyses a quinone + succinate = fumarate + a quinol. The catalysed reaction is (R)-malate + a quinone = enol-oxaloacetate + a quinol. It carries out the reaction (S)-malate + a quinone = enol-oxaloacetate + a quinol. The protein operates within carbohydrate metabolism; tricarboxylic acid cycle; fumarate from succinate (eukaryal route): step 1/1. With respect to regulation, enol-oxaloacetate inhibits the succinate dehydrogenase activity. In terms of biological role, iron-sulfur protein (IP) subunit of the succinate dehydrogenase complex (mitochondrial respiratory chain complex II), responsible for transferring electrons from succinate to ubiquinone (coenzyme Q). SDH also oxidizes malate to the non-canonical enol form of oxaloacetate, enol-oxaloacetate. Enol-oxaloacetate, which is a potent inhibitor of the succinate dehydrogenase activity, is further isomerized into keto-oxaloacetate. This is Succinate dehydrogenase [ubiquinone] iron-sulfur subunit, mitochondrial (Sdhb) from Mus musculus (Mouse).